We begin with the raw amino-acid sequence, 549 residues long: Nucleoporin nup61 (549 aa).

Over residues 1–32 the composition is skewed to basic and acidic residues; that stretch reads MSKRGADHQLTKDQDDSDDDRHGPVEVPKEAS. Disordered regions lie at residues 1–57, 133–193, and 207–438; these read MSKR…VSSP, IEKK…GFSA, and FTPK…NEDS. At S17 the chain carries Phosphoserine. Residues 40–50 are compositionally biased toward basic residues; it reads KIAKPKSRKRP. Residues 141-165 show a composition bias toward polar residues; it reads QPTSNAVVSEVNPQQQKSQDSSSFV. Composition is skewed to basic and acidic residues over residues 170–180 and 217–228; these read ASSEKEDKEKP and SATEAEAKEKET. The span at 229–244 shows a compositional bias: low complexity; sequence SSNQTATGTAATTTNQ. Basic and acidic residues-rich tracts occupy residues 282–310 and 328–339; these read ASKETKQTHETKDSKSEESKPSNNEKSEN and KPIKFDTPEKKF. S347 bears the Phosphoserine mark. The segment covering 407 to 421 has biased composition (basic and acidic residues); sequence SEQEEKENGNDETRS. The RanBD1 domain occupies 416 to 549; it reads NDETRSNDSL…NEKKVSKSEN (134 aa).

The protein localises to the nucleus. It is found in the nuclear pore complex. Its function is as follows. Functions as a component of the nuclear pore complex (NPC). NPC components, collectively referred to as nucleoporins (NUPs), can play the role of both NPC structural components and of docking or interaction partners for transiently associated nuclear transport factors. Active directional transport is assured by both, a Phe-Gly (FG) repeat affinity gradient for these transport factors across the NPC and a transport cofactor concentration gradient across the nuclear envelope. May play a role in mitotic spindle formation and/or function. The polypeptide is Nucleoporin nup61 (nup61) (Schizosaccharomyces pombe (strain 972 / ATCC 24843) (Fission yeast)).